We begin with the raw amino-acid sequence, 484 residues long: tRNA sulfurtransferase (484 aa).

The THUMP domain occupies 63–167; the sequence is QGIRERLSCM…DQRLFVVHDQ (105 aa). ATP contacts are provided by residues 185–186, Lys267, Gly289, and Gln298; that span reads LM. A disulfide bridge connects residues Cys346 and Cys457. The Rhodanese domain maps to 405 to 483; sequence ALAGQVILDI…GHANVRVYRP (79 aa). Cys457 acts as the Cysteine persulfide intermediate in catalysis.

This sequence belongs to the ThiI family.

It is found in the cytoplasm. The catalysed reaction is [ThiI sulfur-carrier protein]-S-sulfanyl-L-cysteine + a uridine in tRNA + 2 reduced [2Fe-2S]-[ferredoxin] + ATP + H(+) = [ThiI sulfur-carrier protein]-L-cysteine + a 4-thiouridine in tRNA + 2 oxidized [2Fe-2S]-[ferredoxin] + AMP + diphosphate. It carries out the reaction [ThiS sulfur-carrier protein]-C-terminal Gly-Gly-AMP + S-sulfanyl-L-cysteinyl-[cysteine desulfurase] + AH2 = [ThiS sulfur-carrier protein]-C-terminal-Gly-aminoethanethioate + L-cysteinyl-[cysteine desulfurase] + A + AMP + 2 H(+). Its pathway is cofactor biosynthesis; thiamine diphosphate biosynthesis. In terms of biological role, catalyzes the ATP-dependent transfer of a sulfur to tRNA to produce 4-thiouridine in position 8 of tRNAs, which functions as a near-UV photosensor. Also catalyzes the transfer of sulfur to the sulfur carrier protein ThiS, forming ThiS-thiocarboxylate. This is a step in the synthesis of thiazole, in the thiamine biosynthesis pathway. The sulfur is donated as persulfide by IscS. The polypeptide is tRNA sulfurtransferase (Pseudomonas syringae pv. syringae (strain B728a)).